Consider the following 363-residue polypeptide: Dihydroorotate dehydrogenase (quinone) (363 aa).

FMN is bound by residues 62–66 and Thr-86; that span reads AGYDK. Lys-66 serves as a coordination point for substrate. Residue 111–115 participates in substrate binding; that stretch reads NRLGF. FMN-binding residues include Asn-140 and Asn-171. Residue Asn-171 participates in substrate binding. Ser-174 functions as the Nucleophile in the catalytic mechanism. Substrate is bound at residue Asn-176. Positions 216 and 244 each coordinate FMN. Position 245-246 (245-246) interacts with substrate; that stretch reads NT. FMN-binding positions include Gly-267, Gly-296, and 317 to 318; that span reads YS.

It belongs to the dihydroorotate dehydrogenase family. Type 2 subfamily. As to quaternary structure, monomer. It depends on FMN as a cofactor.

The protein localises to the cell membrane. It catalyses the reaction (S)-dihydroorotate + a quinone = orotate + a quinol. It participates in pyrimidine metabolism; UMP biosynthesis via de novo pathway; orotate from (S)-dihydroorotate (quinone route): step 1/1. Catalyzes the conversion of dihydroorotate to orotate with quinone as electron acceptor. The polypeptide is Dihydroorotate dehydrogenase (quinone) (Allorhizobium ampelinum (strain ATCC BAA-846 / DSM 112012 / S4) (Agrobacterium vitis (strain S4))).